The chain runs to 304 residues: Recombination-associated protein RdgC (304 aa).

This sequence belongs to the RdgC family.

Its subcellular location is the cytoplasm. The protein localises to the nucleoid. Functionally, may be involved in recombination. In Shewanella oneidensis (strain ATCC 700550 / JCM 31522 / CIP 106686 / LMG 19005 / NCIMB 14063 / MR-1), this protein is Recombination-associated protein RdgC.